The chain runs to 100 residues: Small ribosomal subunit protein uS14c (100 aa).

The protein belongs to the universal ribosomal protein uS14 family. In terms of assembly, part of the 30S ribosomal subunit.

It localises to the plastid. The protein resides in the chloroplast. Its function is as follows. Binds 16S rRNA, required for the assembly of 30S particles. In Trieres chinensis (Marine centric diatom), this protein is Small ribosomal subunit protein uS14c.